The chain runs to 179 residues: Large ribosomal subunit protein uL5 (179 aa).

Belongs to the universal ribosomal protein uL5 family. As to quaternary structure, part of the 50S ribosomal subunit; part of the 5S rRNA/L5/L18/L25 subcomplex. Contacts the 5S rRNA and the P site tRNA. Forms a bridge to the 30S subunit in the 70S ribosome.

Functionally, this is one of the proteins that bind and probably mediate the attachment of the 5S RNA into the large ribosomal subunit, where it forms part of the central protuberance. In the 70S ribosome it contacts protein S13 of the 30S subunit (bridge B1b), connecting the 2 subunits; this bridge is implicated in subunit movement. Contacts the P site tRNA; the 5S rRNA and some of its associated proteins might help stabilize positioning of ribosome-bound tRNAs. This Exiguobacterium sibiricum (strain DSM 17290 / CCUG 55495 / CIP 109462 / JCM 13490 / 255-15) protein is Large ribosomal subunit protein uL5.